The primary structure comprises 1165 residues: Phenyloxazoline synthase MbtB (1165 aa).

A Carrier 1 domain is found at 5 to 78; sequence PARSEDIREE…AWAQLVTAGR (74 aa). Position 39 is an O-(pantetheine 4'-phosphoryl)serine (Ser39). A disordered region spans residues 77 to 100; that stretch reads GRQDTDSAAPPADSSGDPSGETEP. The segment at 97–393 is condensation/cyclization; the sequence is ETEPFALAPM…SSLLLDVDLV (297 aa). Positions 578–973 are adenylation; that stretch reads SYAQLRDQAL…RVPGVRTAVA (396 aa). The Carrier 2 domain occupies 1055–1131; sequence AASTPLEGAL…ALAAVLRAAE (77 aa). Ser1090 is modified (O-(pantetheine 4'-phosphoryl)serine).

This sequence belongs to the ATP-dependent AMP-binding enzyme family. MbtB subfamily. Pantetheine 4'-phosphate is required as a cofactor. Post-translationally, 4'-phosphopantetheine is transferred from CoA to a specific serine in each of the two carrier protein domains, leading to their activation from apo to holo forms.

It participates in siderophore biosynthesis; mycobactin biosynthesis. Involved in the initial steps of the mycobactin biosynthetic pathway. Putatively couples activated salicylic acid with serine or threonine and cyclizes this precursor to the hydroxyphenyloxazoline ring system present in this class of siderophores. The sequence is that of Phenyloxazoline synthase MbtB (mbtB) from Mycolicibacterium paratuberculosis (strain ATCC BAA-968 / K-10) (Mycobacterium paratuberculosis).